A 189-amino-acid chain; its full sequence is Interferon alpha-H (189 aa).

A signal peptide spans 1-23 (MAPAWSFLLALLLLSCNAICSLG). 2 disulfide bridges follow: C24/C122 and C52/C162.

Belongs to the alpha/beta interferon family.

The protein localises to the secreted. In terms of biological role, produced by macrophages, IFN-alpha have antiviral activities. Interferon stimulates the production of two enzymes: a protein kinase and an oligoadenylate synthetase. In Bos taurus (Bovine), this protein is Interferon alpha-H (IFNAH).